The primary structure comprises 429 residues: Adenylosuccinate synthetase (429 aa).

GTP is bound by residues 12 to 18 and 40 to 42; these read GDEGKGK and GHT. D13 (proton acceptor) is an active-site residue. Residues D13 and G40 each contribute to the Mg(2+) site. IMP-binding positions include 13–16, 38–41, T129, R143, Q223, T238, and R302; these read DEGK and NAGH. The active-site Proton donor is H41. Residue 298–304 coordinates substrate; the sequence is VVTGRKR. GTP is bound by residues R304, 330–332, and 412–414; these read KLD and STS.

This sequence belongs to the adenylosuccinate synthetase family. In terms of assembly, homodimer. Mg(2+) is required as a cofactor.

The protein localises to the cytoplasm. It catalyses the reaction IMP + L-aspartate + GTP = N(6)-(1,2-dicarboxyethyl)-AMP + GDP + phosphate + 2 H(+). Its pathway is purine metabolism; AMP biosynthesis via de novo pathway; AMP from IMP: step 1/2. Plays an important role in the de novo pathway of purine nucleotide biosynthesis. Catalyzes the first committed step in the biosynthesis of AMP from IMP. In Bartonella henselae (strain ATCC 49882 / DSM 28221 / CCUG 30454 / Houston 1) (Rochalimaea henselae), this protein is Adenylosuccinate synthetase.